We begin with the raw amino-acid sequence, 77 residues long: Putative membrane protein insertion efficiency factor (77 aa).

It belongs to the UPF0161 family.

The protein resides in the cell membrane. Could be involved in insertion of integral membrane proteins into the membrane. This is Putative membrane protein insertion efficiency factor from Geobacillus sp. (strain WCH70).